A 292-amino-acid polypeptide reads, in one-letter code: ATP synthase gamma chain (292 aa).

This sequence belongs to the ATPase gamma chain family. In terms of assembly, F-type ATPases have 2 components, CF(1) - the catalytic core - and CF(0) - the membrane proton channel. CF(1) has five subunits: alpha(3), beta(3), gamma(1), delta(1), epsilon(1). CF(0) has three main subunits: a, b and c.

It localises to the cell inner membrane. Produces ATP from ADP in the presence of a proton gradient across the membrane. The gamma chain is believed to be important in regulating ATPase activity and the flow of protons through the CF(0) complex. This chain is ATP synthase gamma chain, found in Magnetococcus marinus (strain ATCC BAA-1437 / JCM 17883 / MC-1).